A 43-amino-acid chain; its full sequence is Cytochrome b559 subunit beta (43 aa).

A helical transmembrane segment spans residues 18–34 (WLAVHGLAIPTVFFLGG). H22 lines the heme pocket.

This sequence belongs to the PsbE/PsbF family. Heterodimer of an alpha subunit and a beta subunit. PSII is composed of 1 copy each of membrane proteins PsbA, PsbB, PsbC, PsbD, PsbE, PsbF, PsbH, PsbI, PsbJ, PsbK, PsbL, PsbM, PsbT, PsbX, PsbY, PsbZ, Psb30/Ycf12, at least 3 peripheral proteins of the oxygen-evolving complex and a large number of cofactors. It forms dimeric complexes. The cofactor is heme b.

Its subcellular location is the plastid. The protein resides in the chloroplast thylakoid membrane. This b-type cytochrome is tightly associated with the reaction center of photosystem II (PSII). PSII is a light-driven water:plastoquinone oxidoreductase that uses light energy to abstract electrons from H(2)O, generating O(2) and a proton gradient subsequently used for ATP formation. It consists of a core antenna complex that captures photons, and an electron transfer chain that converts photonic excitation into a charge separation. The polypeptide is Cytochrome b559 subunit beta (Thalassiosira pseudonana (Marine diatom)).